Here is a 428-residue protein sequence, read N- to C-terminus: Metal tolerance protein 10 (428 aa).

Topologically, residues 1–140 (MPLNSYIFFL…EMKKLAKSER (140 aa)) are cytoplasmic. Residues 141 to 161 (LAVHISNATNLVLFVAKVYAS) traverse the membrane as a helical segment. Residues 162–167 (MESRSM) lie on the Vacuolar side of the membrane. A helical membrane pass occupies residues 168 to 188 (AVIASTLDSLLDLLSGFILWF). At 189–209 (TANAMRKPNQFHYPIGKRRMQ) the chain is on the cytoplasmic side. A helical membrane pass occupies residues 210–230 (PVGIIVFASVMATLGLQVLLE). Over 231-248 (SGRQLVAKSGIHMNSTEE) the chain is Vacuolar. The helical transmembrane segment at 249–269 (KWMIGIMVSVTIVKFLLMLYC) threads the bilayer. Topologically, residues 270 to 287 (RGFQNEIVRAYAQDHLFD) are cytoplasmic. The chain crosses the membrane as a helical span at residues 288–308 (VVTNSIGLATAVLAVKFYWWI). Over 309-311 (DPT) the chain is Vacuolar. A helical transmembrane segment spans residues 312-332 (GAILIALYTIATWARTVLENV). Residues 333–428 (HSLIGRSAPP…FTHRPEHKCN (96 aa)) lie on the Cytoplasmic side of the membrane.

It belongs to the cation diffusion facilitator (CDF) transporter (TC 2.A.4) family. SLC30A subfamily.

The protein localises to the vacuole membrane. Its function is as follows. Involved in sequestration of excess metal in the cytoplasm into vacuoles to maintain metal homeostasis. The sequence is that of Metal tolerance protein 10 (MTP10) from Arabidopsis thaliana (Mouse-ear cress).